The sequence spans 179 residues: ATP synthase subunit b (179 aa).

A helical membrane pass occupies residues 23–43 (IFWLIITFGILYVVLSKLILP).

This sequence belongs to the ATPase B chain family. F-type ATPases have 2 components, F(1) - the catalytic core - and F(0) - the membrane proton channel. F(1) has five subunits: alpha(3), beta(3), gamma(1), delta(1), epsilon(1). F(0) has three main subunits: a(1), b(2) and c(10-14). The alpha and beta chains form an alternating ring which encloses part of the gamma chain. F(1) is attached to F(0) by a central stalk formed by the gamma and epsilon chains, while a peripheral stalk is formed by the delta and b chains.

The protein localises to the cell inner membrane. Functionally, f(1)F(0) ATP synthase produces ATP from ADP in the presence of a proton or sodium gradient. F-type ATPases consist of two structural domains, F(1) containing the extramembraneous catalytic core and F(0) containing the membrane proton channel, linked together by a central stalk and a peripheral stalk. During catalysis, ATP synthesis in the catalytic domain of F(1) is coupled via a rotary mechanism of the central stalk subunits to proton translocation. In terms of biological role, component of the F(0) channel, it forms part of the peripheral stalk, linking F(1) to F(0). The chain is ATP synthase subunit b from Pelagibacter ubique (strain HTCC1062).